The sequence spans 392 residues: MGFHTKSPDRVTHEEEANIGVDNQPRETTSTSLNRSQIIKTRNWWICIFVCSCLVVAGRVLSTLLLNFYFIQTGRDVCDDPKQFKGTWLQSMVQNAAFPFTAFLLLLWRSSFSTHSETSSSSSSFGKLFLLYISLGVLFAAYSQLYAIGRTHCVFFLWIFTSQLIFTSIFTTIINKQKFNRWIILSMVLSGAATGLGITSSGGAYIPCENEGSKMSNGAWCAFFGTVAFSLSLCIMQLGFQKVIPTTQSRVSAVILMQTNASMIATLICLVGLFVSGEFKDIKEDFETFKKGKPLYVLSLIGLSLAWQVMSLGLVGLVCLASSLFSNVVSFCSTPLVNILLVLAFRFTDADVKFFKEGALVAGILGFASYVYSLYKSTKKKEIASQSQTTRV.

Residues 1–16 (MGFHTKSPDRVTHEEE) show a composition bias toward basic and acidic residues. The segment at 1–29 (MGFHTKSPDRVTHEEEANIGVDNQPRETT) is disordered. Ser-30 carries the post-translational modification Phosphoserine. A run of 10 helical transmembrane segments spans residues 46 to 66 (ICIF…TLLL), 88 to 108 (WLQS…LLLW), 128 to 148 (LFLL…LYAI), 154 to 174 (VFFL…TTII), 182 to 202 (WIIL…TSSG), 220 to 240 (WCAF…QLGF), 254 to 274 (VILM…VGLF), 300 to 320 (LIGL…LVCL), 325 to 345 (FSNV…VLAF), and 354 to 374 (FFKE…VYSL).

It belongs to the purine permeases (TC 2.A.7.14) family.

It localises to the membrane. The chain is Putative purine permease 19 (PUP19) from Arabidopsis thaliana (Mouse-ear cress).